The following is a 298-amino-acid chain: Small ribosomal subunit protein uS2 (298 aa).

The disordered stretch occupies residues 232–298; it reads ETFEGDDIPS…TAEAEEPAAE (67 aa). Over residues 234 to 250 the composition is skewed to acidic residues; that stretch reads FEGDDIPSAIDFEDETP. Low complexity predominate over residues 251 to 276; it reads EPVAEVADAEVAAAEPVAEAAPTAEA.

It belongs to the universal ribosomal protein uS2 family.

The chain is Small ribosomal subunit protein uS2 from Acaryochloris marina (strain MBIC 11017).